Consider the following 197-residue polypeptide: Probable proteasome subunit beta type-4 (197 aa).

This sequence belongs to the peptidase T1B family. The 26S proteasome consists of a 20S proteasome core and two 19S regulatory subunits. The 20S proteasome core is composed of 28 subunits that are arranged in four stacked rings, resulting in a barrel-shaped structure. The two end rings are each formed by seven alpha subunits, and the two central rings are each formed by seven beta subunits. The catalytic chamber with the active sites is on the inside of the barrel.

The protein localises to the cytoplasm. Its subcellular location is the nucleus. Functionally, non-catalytic component of the proteasome which degrades poly-ubiquitinated proteins in the cytoplasm and in the nucleus. It is essential for the regulated turnover of proteins and for the removal of misfolded proteins. The proteasome is a multicatalytic proteinase complex that is characterized by its ability to cleave peptides with Arg, Phe, Tyr, Leu, and Glu adjacent to the leaving group at neutral or slightly basic pH. It has an ATP-dependent proteolytic activity. This is Probable proteasome subunit beta type-4 (PRE1) from Encephalitozoon cuniculi (strain GB-M1) (Microsporidian parasite).